A 250-amino-acid chain; its full sequence is Small ribosomal subunit protein uS2 (250 aa).

The protein belongs to the universal ribosomal protein uS2 family.

This is Small ribosomal subunit protein uS2 from Albidiferax ferrireducens (strain ATCC BAA-621 / DSM 15236 / T118) (Rhodoferax ferrireducens).